The sequence spans 434 residues: V-type ATP synthase beta chain (434 aa).

Belongs to the ATPase alpha/beta chains family.

Its function is as follows. Produces ATP from ADP in the presence of a proton gradient across the membrane. The V-type beta chain is a regulatory subunit. This is V-type ATP synthase beta chain from Borrelia garinii subsp. bavariensis (strain ATCC BAA-2496 / DSM 23469 / PBi) (Borreliella bavariensis).